Here is a 270-residue protein sequence, read N- to C-terminus: MQSNYFSFPQFDPVIFEIGPIGLRWYGLMYLLGFLFARWLAVKRANQTGSGWTTDQVDSLLFNGFMGVFLGGRIGYVLFYQFDYFLQDPAYLFRVWEGGMSFHGGLIGVILAMLITAKIQKRGFWQTADFVAPLIPFGLGMGRIGNFINDELWGRVTDVPWAVLFPSGGYLPRHPSQLYEAVLEGIVLFFILNWYIKKPRPIGATAGLFLLGYGIFRFIVEFFREPDAQLGLYFGQHISMGQILSTPMILIGAVIMLVAYQSAGKKREIL.

Transmembrane regions (helical) follow at residues 14–34 (VIFE…LLGF), 60–80 (LLFN…VLFY), 95–115 (VWEG…AMLI), 128–148 (ADFV…GNFI), 176–196 (SQLY…NWYI), 202–222 (IGAT…IVEF), and 238–258 (ISMG…IMLV). Arg-143 contributes to the a 1,2-diacyl-sn-glycero-3-phospho-(1'-sn-glycerol) binding site.

The protein belongs to the Lgt family.

The protein localises to the cell inner membrane. It catalyses the reaction L-cysteinyl-[prolipoprotein] + a 1,2-diacyl-sn-glycero-3-phospho-(1'-sn-glycerol) = an S-1,2-diacyl-sn-glyceryl-L-cysteinyl-[prolipoprotein] + sn-glycerol 1-phosphate + H(+). It functions in the pathway protein modification; lipoprotein biosynthesis (diacylglyceryl transfer). Functionally, catalyzes the transfer of the diacylglyceryl group from phosphatidylglycerol to the sulfhydryl group of the N-terminal cysteine of a prolipoprotein, the first step in the formation of mature lipoproteins. The chain is Phosphatidylglycerol--prolipoprotein diacylglyceryl transferase from Pasteurella multocida (strain Pm70).